The following is a 185-amino-acid chain: Adenylyl-sulfate kinase (185 aa).

13–20 (GLSGAGKT) is an ATP binding site. S87 (phosphoserine intermediate) is an active-site residue.

The protein belongs to the APS kinase family.

The catalysed reaction is adenosine 5'-phosphosulfate + ATP = 3'-phosphoadenylyl sulfate + ADP + H(+). It participates in sulfur metabolism; hydrogen sulfide biosynthesis; sulfite from sulfate: step 2/3. Its function is as follows. Catalyzes the synthesis of activated sulfate. This Halothermothrix orenii (strain H 168 / OCM 544 / DSM 9562) protein is Adenylyl-sulfate kinase.